Consider the following 205-residue polypeptide: GTP-binding protein yptV5 (205 aa).

15-22 is a binding site for GTP; the sequence is GDSGVGKT. Residues 37-45 carry the Effector region motif; sequence YKATIGADF. Residues 63-67 and 125-128 contribute to the GTP site; these read DTAGQ and NKID. Residues Cys-204 and Cys-205 are each lipidated (S-geranylgeranyl cysteine).

Belongs to the small GTPase superfamily. Rab family.

It localises to the cell membrane. Protein transport. Probably involved in vesicular traffic. The protein is GTP-binding protein yptV5 (YPTV5) of Volvox carteri (Green alga).